A 420-amino-acid polypeptide reads, in one-letter code: L-cysteine:1D-myo-inositol 2-amino-2-deoxy-alpha-D-glucopyranoside ligase (420 aa).

Cys43 is a binding site for Zn(2+). L-cysteinyl-5'-AMP-binding positions include 43 to 46 (CGIT), Thr58, and 81 to 83 (NIT). Positions 45–55 (ITPYDATHLGH) match the 'HIGH' region motif. The 'ERGGDP' region motif lies at 187-192 (ERGGDP). Trp227 is a binding site for L-cysteinyl-5'-AMP. Cys231 provides a ligand contact to Zn(2+). 249 to 251 (GSD) is a binding site for L-cysteinyl-5'-AMP. Position 256 (His256) interacts with Zn(2+). Ile289 provides a ligand contact to L-cysteinyl-5'-AMP. The 'KMSKS' region motif lies at 295–299 (KMSKS).

Belongs to the class-I aminoacyl-tRNA synthetase family. MshC subfamily. In terms of assembly, monomer. Zn(2+) serves as cofactor.

It catalyses the reaction 1D-myo-inositol 2-amino-2-deoxy-alpha-D-glucopyranoside + L-cysteine + ATP = 1D-myo-inositol 2-(L-cysteinylamino)-2-deoxy-alpha-D-glucopyranoside + AMP + diphosphate + H(+). Catalyzes the ATP-dependent condensation of GlcN-Ins and L-cysteine to form L-Cys-GlcN-Ins. The protein is L-cysteine:1D-myo-inositol 2-amino-2-deoxy-alpha-D-glucopyranoside ligase of Segniliparus rotundus (strain ATCC BAA-972 / CDC 1076 / CIP 108378 / DSM 44985 / JCM 13578).